A 692-amino-acid polypeptide reads, in one-letter code: Elongation factor G (692 aa).

The 275-residue stretch at Lys8–Leu282 folds into the tr-type G domain. GTP contacts are provided by residues Ala17–Thr24, Asp81–His85, and Asn135–Asp138.

Belongs to the TRAFAC class translation factor GTPase superfamily. Classic translation factor GTPase family. EF-G/EF-2 subfamily.

It is found in the cytoplasm. Catalyzes the GTP-dependent ribosomal translocation step during translation elongation. During this step, the ribosome changes from the pre-translocational (PRE) to the post-translocational (POST) state as the newly formed A-site-bound peptidyl-tRNA and P-site-bound deacylated tRNA move to the P and E sites, respectively. Catalyzes the coordinated movement of the two tRNA molecules, the mRNA and conformational changes in the ribosome. The protein is Elongation factor G (fusA) of Mycoplasmopsis pulmonis (strain UAB CTIP) (Mycoplasma pulmonis).